The following is a 208-amino-acid chain: Redox-sensing transcriptional repressor Rex (208 aa).

A DNA-binding region (H-T-H motif) is located at residues 18-57; sequence IYYRYFKLLETDGIERIKSEQLAKLVAIPSATIRRDFSYI. 92–97 lines the NAD(+) pocket; sequence GVGNLG.

The protein belongs to the transcriptional regulatory Rex family. In terms of assembly, homodimer.

Its subcellular location is the cytoplasm. Modulates transcription in response to changes in cellular NADH/NAD(+) redox state. This chain is Redox-sensing transcriptional repressor Rex, found in Latilactobacillus sakei subsp. sakei (strain 23K) (Lactobacillus sakei subsp. sakei).